A 181-amino-acid chain; its full sequence is Oligoribonuclease (181 aa).

The Exonuclease domain maps to 8 to 171 (LIWIDLEMTG…DDIRESVAEL (164 aa)). Tyr-129 is an active-site residue.

Belongs to the oligoribonuclease family.

The protein localises to the cytoplasm. Functionally, 3'-to-5' exoribonuclease specific for small oligoribonucleotides. The protein is Oligoribonuclease of Enterobacter sp. (strain 638).